The sequence spans 430 residues: Enolase (430 aa).

A (2R)-2-phosphoglycerate-binding site is contributed by Q165. E207 (proton donor) is an active-site residue. 3 residues coordinate Mg(2+): D244, E287, and D314. K339, R368, S369, and K390 together coordinate (2R)-2-phosphoglycerate. Catalysis depends on K339, which acts as the Proton acceptor.

It belongs to the enolase family. In terms of assembly, component of the RNA degradosome, a multiprotein complex involved in RNA processing and mRNA degradation. Mg(2+) is required as a cofactor.

It is found in the cytoplasm. The protein resides in the secreted. Its subcellular location is the cell surface. The catalysed reaction is (2R)-2-phosphoglycerate = phosphoenolpyruvate + H2O. The protein operates within carbohydrate degradation; glycolysis; pyruvate from D-glyceraldehyde 3-phosphate: step 4/5. Functionally, catalyzes the reversible conversion of 2-phosphoglycerate (2-PG) into phosphoenolpyruvate (PEP). It is essential for the degradation of carbohydrates via glycolysis. This chain is Enolase, found in Stenotrophomonas maltophilia (strain R551-3).